The chain runs to 412 residues: Alpha-1-antiproteinase (412 aa).

An N-terminal signal peptide occupies residues 1-24 (MTPSISWGLLLLAGLFCLVPSFLA). Serine 33 is subject to Phosphoserine. N-linked (GlcNAc...) asparagine glycosylation is found at asparagine 100, asparagine 133, asparagine 264, and asparagine 313. Positions 367–386 (AATVLQAVPMSMPPILNFNK) are RCL. The residue at position 377 (serine 377) is a Phosphoserine.

It belongs to the serpin family. As to quaternary structure, interacts with CELA2A. Interacts with ERGIC3 and LMAN1/ERGIC53. Interacts with PRSS1/Trypsin. In terms of tissue distribution, expressed not only in liver but also in kidney tubule cells, where it is regulated by androgens during development.

It is found in the secreted. Inhibitor of serine proteases. Its primary target is elastase, but it also has a moderate affinity for plasmin and thrombin. The sequence is that of Alpha-1-antiproteinase (Serpina1) from Mus caroli (Ryukyu mouse).